A 302-amino-acid chain; its full sequence is 4-hydroxy-tetrahydrodipicolinate synthase (302 aa).

T46 lines the pyruvate pocket. The Proton donor/acceptor role is filled by Y134. Residue K162 is the Schiff-base intermediate with substrate of the active site. A pyruvate-binding site is contributed by V204.

This sequence belongs to the DapA family. As to quaternary structure, homotetramer; dimer of dimers.

It localises to the cytoplasm. The enzyme catalyses L-aspartate 4-semialdehyde + pyruvate = (2S,4S)-4-hydroxy-2,3,4,5-tetrahydrodipicolinate + H2O + H(+). It participates in amino-acid biosynthesis; L-lysine biosynthesis via DAP pathway; (S)-tetrahydrodipicolinate from L-aspartate: step 3/4. Catalyzes the condensation of (S)-aspartate-beta-semialdehyde [(S)-ASA] and pyruvate to 4-hydroxy-tetrahydrodipicolinate (HTPA). This Xanthomonas campestris pv. campestris (strain ATCC 33913 / DSM 3586 / NCPPB 528 / LMG 568 / P 25) protein is 4-hydroxy-tetrahydrodipicolinate synthase.